A 343-amino-acid chain; its full sequence is Aspartate-semialdehyde dehydrogenase (343 aa).

Residues 13–16 (TGAV) and 41–42 (KS) each bind NADP(+). Arg-103 contributes to the phosphate binding site. Cys-134 (acyl-thioester intermediate) is an active-site residue. Gln-161 provides a ligand contact to substrate. 164–165 (SG) contacts NADP(+). Lys-220 provides a ligand contact to phosphate. Position 241 (Arg-241) interacts with substrate. His-248 acts as the Proton acceptor in catalysis. Gln-321 contacts NADP(+).

This sequence belongs to the aspartate-semialdehyde dehydrogenase family. Homodimer.

The catalysed reaction is L-aspartate 4-semialdehyde + phosphate + NADP(+) = 4-phospho-L-aspartate + NADPH + H(+). Its pathway is amino-acid biosynthesis; L-lysine biosynthesis via DAP pathway; (S)-tetrahydrodipicolinate from L-aspartate: step 2/4. It functions in the pathway amino-acid biosynthesis; L-methionine biosynthesis via de novo pathway; L-homoserine from L-aspartate: step 2/3. The protein operates within amino-acid biosynthesis; L-threonine biosynthesis; L-threonine from L-aspartate: step 2/5. Catalyzes the NADPH-dependent formation of L-aspartate-semialdehyde (L-ASA) by the reductive dephosphorylation of L-aspartyl-4-phosphate. The chain is Aspartate-semialdehyde dehydrogenase from Campylobacter jejuni subsp. jejuni serotype O:2 (strain ATCC 700819 / NCTC 11168).